Consider the following 476-residue polypeptide: Glutamate--tRNA ligase 1 (476 aa).

A 'HIGH' region motif is present at residues 9-19 (PSPTGFLHIGG). The short motif at 238–242 (KLSKR) is the 'KMSKS' region element. Lys241 contributes to the ATP binding site.

It belongs to the class-I aminoacyl-tRNA synthetase family. Glutamate--tRNA ligase type 1 subfamily. Monomer.

It is found in the cytoplasm. The enzyme catalyses tRNA(Glu) + L-glutamate + ATP = L-glutamyl-tRNA(Glu) + AMP + diphosphate. Functionally, catalyzes the attachment of glutamate to tRNA(Glu) in a two-step reaction: glutamate is first activated by ATP to form Glu-AMP and then transferred to the acceptor end of tRNA(Glu). In Bartonella bacilliformis (strain ATCC 35685 / KC583 / Herrer 020/F12,63), this protein is Glutamate--tRNA ligase 1.